Consider the following 40-residue polypeptide: Photosystem II reaction center protein J (40 aa).

A helical transmembrane segment spans residues 8–28; the sequence is IPLWMIGTLAGILVISLIGIF.

This sequence belongs to the PsbJ family. In terms of assembly, PSII is composed of 1 copy each of membrane proteins PsbA, PsbB, PsbC, PsbD, PsbE, PsbF, PsbH, PsbI, PsbJ, PsbK, PsbL, PsbM, PsbT, PsbX, PsbY, PsbZ, Psb30/Ycf12, at least 3 peripheral proteins of the oxygen-evolving complex and a large number of cofactors. It forms dimeric complexes.

The protein resides in the plastid membrane. One of the components of the core complex of photosystem II (PSII). PSII is a light-driven water:plastoquinone oxidoreductase that uses light energy to abstract electrons from H(2)O, generating O(2) and a proton gradient subsequently used for ATP formation. It consists of a core antenna complex that captures photons, and an electron transfer chain that converts photonic excitation into a charge separation. The sequence is that of Photosystem II reaction center protein J from Cuscuta gronovii (Common dodder).